Here is a 203-residue protein sequence, read N- to C-terminus: Thymidylate kinase (203 aa).

Residue 10-17 participates in ATP binding; the sequence is GIDGAGKS.

It belongs to the thymidylate kinase family.

The catalysed reaction is dTMP + ATP = dTDP + ADP. In terms of biological role, phosphorylation of dTMP to form dTDP in both de novo and salvage pathways of dTTP synthesis. In Cupriavidus taiwanensis (strain DSM 17343 / BCRC 17206 / CCUG 44338 / CIP 107171 / LMG 19424 / R1) (Ralstonia taiwanensis (strain LMG 19424)), this protein is Thymidylate kinase.